The following is an 89-amino-acid chain: Neurotoxin LmNaTx28 (89 aa).

Residues 1 to 18 (MNLPTVLCIIALILGVRS) form the signal peptide. Positions 20–85 (KNGFFTKLGK…VADSSEKACQ (66 aa)) constitute an LCN-type CS-alpha/beta domain. Intrachain disulfides connect Cys-33/Cys-57, Cys-43/Cys-62, Cys-47/Cys-64, and Cys-58/Cys-84.

This sequence belongs to the long (4 C-C) scorpion toxin superfamily. Sodium channel inhibitor family. Beta subfamily. In terms of tissue distribution, expressed by the venom gland.

The protein localises to the secreted. Binds voltage-independently at site-4 of sodium channels (Nav) and shift the voltage of activation toward more negative potentials thereby affecting sodium channel activation and promoting spontaneous and repetitive firing. The polypeptide is Neurotoxin LmNaTx28 (Lychas mucronatus (Chinese swimming scorpion)).